The chain runs to 260 residues: Thiazole synthase (260 aa).

Catalysis depends on lysine 100, which acts as the Schiff-base intermediate with DXP. Residues glycine 161, 187-188, and 209-210 contribute to the 1-deoxy-D-xylulose 5-phosphate site; these read AG and NT.

Belongs to the ThiG family. As to quaternary structure, homotetramer. Forms heterodimers with either ThiH or ThiS.

It is found in the cytoplasm. The catalysed reaction is [ThiS sulfur-carrier protein]-C-terminal-Gly-aminoethanethioate + 2-iminoacetate + 1-deoxy-D-xylulose 5-phosphate = [ThiS sulfur-carrier protein]-C-terminal Gly-Gly + 2-[(2R,5Z)-2-carboxy-4-methylthiazol-5(2H)-ylidene]ethyl phosphate + 2 H2O + H(+). It functions in the pathway cofactor biosynthesis; thiamine diphosphate biosynthesis. Catalyzes the rearrangement of 1-deoxy-D-xylulose 5-phosphate (DXP) to produce the thiazole phosphate moiety of thiamine. Sulfur is provided by the thiocarboxylate moiety of the carrier protein ThiS. In vitro, sulfur can be provided by H(2)S. This is Thiazole synthase from Dechloromonas aromatica (strain RCB).